The chain runs to 470 residues: UDP-N-acetylmuramate--L-alanine ligase (470 aa).

118-124 (GTHGKTT) contacts ATP.

Belongs to the MurCDEF family.

It is found in the cytoplasm. The enzyme catalyses UDP-N-acetyl-alpha-D-muramate + L-alanine + ATP = UDP-N-acetyl-alpha-D-muramoyl-L-alanine + ADP + phosphate + H(+). Its pathway is cell wall biogenesis; peptidoglycan biosynthesis. Cell wall formation. The protein is UDP-N-acetylmuramate--L-alanine ligase of Cereibacter sphaeroides (strain KD131 / KCTC 12085) (Rhodobacter sphaeroides).